Here is a 116-residue protein sequence, read N- to C-terminus: Large ribosomal subunit protein bL17 (116 aa).

Belongs to the bacterial ribosomal protein bL17 family. As to quaternary structure, part of the 50S ribosomal subunit. Contacts protein L32.

This is Large ribosomal subunit protein bL17 from Prochlorococcus marinus (strain MIT 9301).